Here is a 212-residue protein sequence, read N- to C-terminus: Uridine kinase (212 aa).

Position 13 to 20 (13 to 20 (GGSGSGKT)) interacts with ATP.

It belongs to the uridine kinase family.

It localises to the cytoplasm. It catalyses the reaction uridine + ATP = UMP + ADP + H(+). The enzyme catalyses cytidine + ATP = CMP + ADP + H(+). The protein operates within pyrimidine metabolism; CTP biosynthesis via salvage pathway; CTP from cytidine: step 1/3. Its pathway is pyrimidine metabolism; UMP biosynthesis via salvage pathway; UMP from uridine: step 1/1. The sequence is that of Uridine kinase from Bacillus cereus (strain ATCC 10987 / NRS 248).